A 208-amino-acid polypeptide reads, in one-letter code: Probable nicotinate-nucleotide adenylyltransferase (208 aa).

Belongs to the NadD family.

The enzyme catalyses nicotinate beta-D-ribonucleotide + ATP + H(+) = deamido-NAD(+) + diphosphate. Its pathway is cofactor biosynthesis; NAD(+) biosynthesis; deamido-NAD(+) from nicotinate D-ribonucleotide: step 1/1. Functionally, catalyzes the reversible adenylation of nicotinate mononucleotide (NaMN) to nicotinic acid adenine dinucleotide (NaAD). In Acidothermus cellulolyticus (strain ATCC 43068 / DSM 8971 / 11B), this protein is Probable nicotinate-nucleotide adenylyltransferase.